Consider the following 414-residue polypeptide: Serine--tRNA ligase (414 aa).

230–232 (TSE) contributes to the L-serine binding site. 261 to 263 (RQE) contributes to the ATP binding site. Glu-284 contributes to the L-serine binding site. ATP is bound at residue 348 to 351 (EISS). Ser-382 serves as a coordination point for L-serine.

Belongs to the class-II aminoacyl-tRNA synthetase family. Type-1 seryl-tRNA synthetase subfamily. In terms of assembly, homodimer. The tRNA molecule binds across the dimer.

Its subcellular location is the cytoplasm. It catalyses the reaction tRNA(Ser) + L-serine + ATP = L-seryl-tRNA(Ser) + AMP + diphosphate + H(+). The enzyme catalyses tRNA(Sec) + L-serine + ATP = L-seryl-tRNA(Sec) + AMP + diphosphate + H(+). It functions in the pathway aminoacyl-tRNA biosynthesis; selenocysteinyl-tRNA(Sec) biosynthesis; L-seryl-tRNA(Sec) from L-serine and tRNA(Sec): step 1/1. Functionally, catalyzes the attachment of serine to tRNA(Ser). Is also able to aminoacylate tRNA(Sec) with serine, to form the misacylated tRNA L-seryl-tRNA(Sec), which will be further converted into selenocysteinyl-tRNA(Sec). This Campylobacter fetus subsp. fetus (strain 82-40) protein is Serine--tRNA ligase.